A 483-amino-acid chain; its full sequence is 3-isopropylmalate dehydratase large subunit (483 aa).

Positions 352, 412, and 415 each coordinate [4Fe-4S] cluster.

This sequence belongs to the aconitase/IPM isomerase family. LeuC type 1 subfamily. In terms of assembly, heterodimer of LeuC and LeuD. The cofactor is [4Fe-4S] cluster.

The catalysed reaction is (2R,3S)-3-isopropylmalate = (2S)-2-isopropylmalate. Its pathway is amino-acid biosynthesis; L-leucine biosynthesis; L-leucine from 3-methyl-2-oxobutanoate: step 2/4. Functionally, catalyzes the isomerization between 2-isopropylmalate and 3-isopropylmalate, via the formation of 2-isopropylmaleate. This is 3-isopropylmalate dehydratase large subunit from Paenarthrobacter aurescens (strain TC1).